Reading from the N-terminus, the 635-residue chain is Paraneoplastic antigen-like protein 8B (635 aa).

Disordered regions lie at residues 115 to 202 (PTQA…DESL), 260 to 332 (TDKS…NPEF), and 492 to 635 (AARE…PKCR). Residues 133–147 (SETQAQDSGEVTGQA) are compositionally biased toward polar residues. Over residues 156–183 (NPRRGRRGRRNRTRRNRLTQKGKKRSRG) the composition is skewed to basic residues. The segment covering 261-273 (DKSKKEEAEKEPA) has biased composition (basic and acidic residues). 2 stretches are compositionally biased toward acidic residues: residues 302–329 (PDEE…ELDN) and 502–524 (GSEE…EASE). The span at 531 to 540 (RKPRAKRART) shows a compositional bias: basic residues. The segment covering 541–557 (APRGLTPAGAPPTASGA) has biased composition (low complexity). 2 stretches are compositionally biased toward basic residues: residues 558–568 (RKTRAGGRGRG) and 619–635 (ARGK…PKCR).

It belongs to the PNMA family.

The chain is Paraneoplastic antigen-like protein 8B from Homo sapiens (Human).